Consider the following 749-residue polypeptide: cGMP-dependent protein kinase egl-4 (749 aa).

Positions 30–96 (EAHELQKLIP…LEQKAQSAAS (67 aa)) form a coiled coil. The segment at 87 to 111 (LEQKAQSAASPGQPPSPSPRTDQLG) is disordered. 3',5'-cyclic GMP contacts are provided by residues 234 to 237 (GELA), 244 to 245 (RT), Arg-349, 358 to 361 (GERA), 368 to 369 (RT), and Tyr-403. Residues 438 to 698 (VKRLATLGVG…VNDIRKHRWF (261 aa)) enclose the Protein kinase domain. ATP is bound by residues 444–452 (LGVGGFGRV) and Lys-468. Positions 461–473 (KSKTYALKALKKK) match the Nuclear localization signal motif. Residue Asp-562 is the Proton acceptor of the active site. In terms of domain architecture, AGC-kinase C-terminal spans 699 to 749 (MGFDWEGLRTKTLKPPILPKVNNPADVTNFDNYPPDNDVPPDEFSGWDEGF). A disordered region spans residues 723-749 (ADVTNFDNYPPDNDVPPDEFSGWDEGF).

Belongs to the protein kinase superfamily. AGC Ser/Thr protein kinase family. cGMP subfamily. Mg(2+) is required as a cofactor. Post-translationally, autophosphorylated.

The protein resides in the cytoplasm. The protein localises to the nucleus. It carries out the reaction L-seryl-[protein] + ATP = O-phospho-L-seryl-[protein] + ADP + H(+). The catalysed reaction is L-threonyl-[protein] + ATP = O-phospho-L-threonyl-[protein] + ADP + H(+). With respect to regulation, binding of cGMP results in enzyme activation. Promotes chemoreceptor gene expression in response to increased cGMP levels by antagonizing the gene repression functions of the class II HDAC hda-4 and the mef-2 transcription factor. Regulates gene expression via recruitment of a histone deacetylase complex containing hda-2, saeg-1 and saeg-2. Represses body size and lifespan through the dbl-1 and insulin pathways, respectively. May also signal through daf-3 and/or daf-5. Role in egg-laying, dauer formation and motility. Regulates behavioral responses to various chemosensory stimuli in sensory neurons. Required for the initiation of long term adaptation to prolonged odor exposure which results in a decrease in odor seeking behavior. May regulate this process by phosphorylating tax-2, a subunit of cyclic nucleotide-gated channel tax-2/tax-4. In ASH sensory neurons, negatively regulates avoidance behavior to some bitter tastants, such as quinine, probably by phosphorylating rgs-2 and rgs-3 which are 2 regulator of G-protein signaling proteins. In AWB sensory neurons, involved in avoidance behavior to some repellent odors. In ASE left (ASEL) sensory neuron, involved in the sensing of environmental alkalinity downstream of receptor-type guanylate cyclase gcy-14. In sensory neurons, involved in the signaling pathway downstream of insulin, TGF-beta and receptor-type guanylate cyclase responsible for inducing quiescence after food intake. Might play a role in aversive olfactory learning in AWC neurons when an odor is associated with food deprivation, depending on the ins-1/age-1 signal from the AIA to the AWC neurons. Probably by regulating neuronal transmission downstream of lin-3 and receptor lin-23 and phospholipase plc-3 in ALA neurons, involved in the decrease in locomotion during the quiescent state that precedes each larval molt. In Caenorhabditis briggsae, this protein is cGMP-dependent protein kinase egl-4.